We begin with the raw amino-acid sequence, 1265 residues long: Shugoshin 2 (1265 aa).

Residues 69–116 (KENSRRITTEKMLLQKEVEKLNFENTFLRLKLNNLNKKLIDIEALMNN) are a coiled coil. Disordered regions lie at residues 161 to 202 (LTSN…STQD), 230 to 287 (DVPP…NLSA), 305 to 339 (LNCNNEINGHTNETNTEMQRNKQDLPGLSSESARE), and 381 to 447 (GIKK…GAED). The span at 190 to 202 (SSGSTTQPLSTQD) shows a compositional bias: polar residues. Basic and acidic residues predominate over residues 232-242 (PPRESHSHSDQ). Over residues 305–322 (LNCNNEINGHTNETNTEM) the composition is skewed to polar residues. 2 stretches are compositionally biased toward basic and acidic residues: residues 389 to 410 (KTNEHGMKTFRKVKDSSSEKKR) and 425 to 446 (IGEKIENRTERSDVLDGKRGAE). Residues 452–476 (FNNEQLAQMNEQLAQVNELKKMTLQ) are a coiled coil. Positions 499 to 526 (EQEETYSLSQSSGKFHQESKFDKGQNSL) are disordered. Residues 503–512 (TYSLSQSSGK) are compositionally biased toward polar residues. Residues 603 to 626 (EQNESNINKLRKKVNRKTEIISGM) are a coiled coil. Basic residues predominate over residues 1073-1083 (NKMTSKSKKRK). The tract at residues 1073 to 1093 (NKMTSKSKKRKTSIDPSPESH) is disordered. Phosphoserine is present on Ser-1144. The segment at 1200-1265 (KVNRRTQKSG…EPSLRDKMRR (66 aa)) is disordered. A compositionally biased stretch (polar residues) spans 1217 to 1230 (DLSNTSFVSNNTAE). Residues 1231-1243 (SENKSEDLSSERT) are compositionally biased toward basic and acidic residues.

Belongs to the shugoshin family. In terms of assembly, part of an astrin (SPAG5) -kinastrin (SKAP) complex containing KNSTRN, SPAG5, PLK1, DYNLL1 and SGO2. Interacts with CDCA8. Directly interacts with PPP2CA.

The protein resides in the nucleus. The protein localises to the chromosome. It localises to the centromere. It is found in the kinetochore. Cooperates with PPP2CA to protect centromeric cohesin from separase-mediated cleavage in oocytes specifically during meiosis I. Has a crucial role in protecting REC8 at centromeres from cleavage by separase. During meiosis, protects centromeric cohesion complexes until metaphase II/anaphase II transition, preventing premature release of meiosis-specific REC8 cohesin complexes from anaphase I centromeres. Is thus essential for an accurate gametogenesis. May act by targeting PPP2CA to centromeres, thus leading to cohesin dephosphorylation. Essential for recruiting KIF2C to the inner centromere and for correcting defective kinetochore attachments. Involved in centromeric enrichment of AUKRB in prometaphase. The chain is Shugoshin 2 from Homo sapiens (Human).